The primary structure comprises 284 residues: 4-hydroxy-3-methylbut-2-enyl diphosphate reductase (284 aa).

A [4Fe-4S] cluster-binding site is contributed by cysteine 12. Residues histidine 40 and histidine 72 each coordinate (2E)-4-hydroxy-3-methylbut-2-enyl diphosphate. Residues histidine 40 and histidine 72 each coordinate dimethylallyl diphosphate. Residues histidine 40 and histidine 72 each contribute to the isopentenyl diphosphate site. Cysteine 94 contributes to the [4Fe-4S] cluster binding site. Histidine 122 contributes to the (2E)-4-hydroxy-3-methylbut-2-enyl diphosphate binding site. Histidine 122 serves as a coordination point for dimethylallyl diphosphate. Isopentenyl diphosphate is bound at residue histidine 122. Glutamate 124 (proton donor) is an active-site residue. (2E)-4-hydroxy-3-methylbut-2-enyl diphosphate is bound at residue threonine 161. Cysteine 193 provides a ligand contact to [4Fe-4S] cluster. The (2E)-4-hydroxy-3-methylbut-2-enyl diphosphate site is built by serine 221, asparagine 223, and serine 264. Dimethylallyl diphosphate is bound by residues serine 221, asparagine 223, and serine 264. Isopentenyl diphosphate-binding residues include serine 221, asparagine 223, and serine 264.

It belongs to the IspH family. [4Fe-4S] cluster is required as a cofactor.

The enzyme catalyses isopentenyl diphosphate + 2 oxidized [2Fe-2S]-[ferredoxin] + H2O = (2E)-4-hydroxy-3-methylbut-2-enyl diphosphate + 2 reduced [2Fe-2S]-[ferredoxin] + 2 H(+). The catalysed reaction is dimethylallyl diphosphate + 2 oxidized [2Fe-2S]-[ferredoxin] + H2O = (2E)-4-hydroxy-3-methylbut-2-enyl diphosphate + 2 reduced [2Fe-2S]-[ferredoxin] + 2 H(+). The protein operates within isoprenoid biosynthesis; dimethylallyl diphosphate biosynthesis; dimethylallyl diphosphate from (2E)-4-hydroxy-3-methylbutenyl diphosphate: step 1/1. It participates in isoprenoid biosynthesis; isopentenyl diphosphate biosynthesis via DXP pathway; isopentenyl diphosphate from 1-deoxy-D-xylulose 5-phosphate: step 6/6. In terms of biological role, catalyzes the conversion of 1-hydroxy-2-methyl-2-(E)-butenyl 4-diphosphate (HMBPP) into a mixture of isopentenyl diphosphate (IPP) and dimethylallyl diphosphate (DMAPP). Acts in the terminal step of the DOXP/MEP pathway for isoprenoid precursor biosynthesis. The sequence is that of 4-hydroxy-3-methylbut-2-enyl diphosphate reductase from Dehalococcoides mccartyi (strain ATCC BAA-2100 / JCM 16839 / KCTC 5957 / BAV1).